Reading from the N-terminus, the 558-residue chain is Atlastin-1 (558 aa).

The tract at residues 1–28 (MAKSRRDRNSWGGFSEKSSDWSSEEEEP) is disordered. The segment at 1 to 34 (MAKSRRDRNSWGGFSEKSSDWSSEEEEPVRKAGP) is N-terminal hypervariable region (HVR). Residues 1–449 (MAKSRRDRNS…NIFHAARTPA (449 aa)) are Cytoplasmic-facing. Phosphoserine is present on residues Ser10, Ser22, and Ser23. Residues 64-309 (DKEVVAVSVA…LIPWLLSPER (246 aa)) enclose the GB1/RHD3-type G domain. Residues Arg77, Lys78, Gly79, Lys80, Ser81, Phe82, Gln148, Arg217, Asp218, Val276, and Asn279 each coordinate GDP. Positions 77, 78, 79, 80, 81, and 82 each coordinate GTP. Ser81 contributes to the Mg(2+) binding site. Arg217, Asp218, and Val276 together coordinate GTP. Residues 347–438 (MLQATAEANN…YIQYIKHNDS (92 aa)) form a 3HB (three-helix bundle) domain region. Position 395 is an N6-acetyllysine (Lys395). Residues 412–439 (EFSRRYLQQLESEIDELYIQYIKHNDSK) are a coiled coil. Positions 439–447 (KNIFHAART) are linker. A helical transmembrane segment spans residues 450–470 (TLFVVIFITYVIAGVTGFIGL). Residue Asp471 is a topological domain, lumenal. Residues 472–492 (IIASLCNMIMGLTLITLCTWA) form a helical membrane-spanning segment. At 493–558 (YIRYSGEYRE…PTQQPEKKKI (66 aa)) the chain is on the cytoplasmic side. The autoinhibitory domain stretch occupies residues 521-558 (NEALYKLYSAAATHRHLCHQAFPAPKSEPTQQPEKKKI).

Belongs to the TRAFAC class dynamin-like GTPase superfamily. GB1/RHD3 GTPase family. GB1 subfamily. As to quaternary structure, monomeric and homodimeric. The homodimer, transiently formed by two molecules on opposing membranes, is the active form mediating ER membrane fusion. Interacts with REEP1, REEP5, RTN3 and RTN4 (via the transmembrane region); these proteins are involved in endoplasmic reticulum tubular network organization. Interacts with ZFYVE27; both proteins are involved in endoplasmic reticulum tubular network organization. Interacts with ARL6IP1; both proteins are involved in endoplasmic reticulum tubular network organization. Interacts with SPAST; the interaction is direct, could recruit SPAST to Golgi membranes. Interacts (via N-terminal region) with MAP4K4 (via CNH regulatory domain). May interact with TMED2. Interacts with CPT1C. Post-translationally, phosphorylated. Phosphorylation, by different kinases, of the N-terminal hypervariable region (HVR) regulates the ATL1-mediated membrane tethering step.

It localises to the endoplasmic reticulum membrane. The protein resides in the golgi apparatus membrane. The protein localises to the cell projection. Its subcellular location is the axon. It carries out the reaction GTP + H2O = GDP + phosphate + H(+). Atlastin-1 (ATL1) is a membrane-anchored GTPase that mediates the GTP-dependent fusion of endoplasmic reticulum (ER) membranes, maintaining the continuous ER network. It facilitates the formation of three-way junctions where ER tubules intersect. Two atlastin-1 on neighboring ER tubules bind GTP and form loose homodimers through the GB1/RHD3-type G domains and 3HB regions. Upon GTP hydrolysis, the 3HB regions tighten, pulling the membranes together to drive their fusion. After fusion, the homodimer disassembles upon release of inorganic phosphate (Pi). Subsequently, GDP dissociates, resetting the monomers to a conformation ready for a new fusion cycle. May also regulate more or less directly Golgi biogenesis. Indirectly regulates axonal development. The polypeptide is Atlastin-1 (Mus musculus (Mouse)).